The chain runs to 346 residues: N-acetyl-gamma-glutamyl-phosphate reductase (346 aa).

The active site involves Cys150.

This sequence belongs to the NAGSA dehydrogenase family. Type 1 subfamily.

Its subcellular location is the cytoplasm. It carries out the reaction N-acetyl-L-glutamate 5-semialdehyde + phosphate + NADP(+) = N-acetyl-L-glutamyl 5-phosphate + NADPH + H(+). Its pathway is amino-acid biosynthesis; L-arginine biosynthesis; N(2)-acetyl-L-ornithine from L-glutamate: step 3/4. Catalyzes the NADPH-dependent reduction of N-acetyl-5-glutamyl phosphate to yield N-acetyl-L-glutamate 5-semialdehyde. The sequence is that of N-acetyl-gamma-glutamyl-phosphate reductase from Acetivibrio thermocellus (strain ATCC 27405 / DSM 1237 / JCM 9322 / NBRC 103400 / NCIMB 10682 / NRRL B-4536 / VPI 7372) (Clostridium thermocellum).